The chain runs to 416 residues: Nuclear hormone receptor family member nhr-67 (416 aa).

The nuclear receptor DNA-binding region spans Asp-18–His-98. 2 NR C4-type zinc fingers span residues Cys-21–Cys-41 and Cys-57–Cys-86. Residues Lys-331–Ser-398 are disordered. The span at Glu-335–Ala-346 shows a compositional bias: acidic residues. Over residues Ser-377–Ser-390 the composition is skewed to low complexity.

This sequence belongs to the nuclear hormone receptor family. In terms of tissue distribution, expressed in linker cell.

The protein localises to the nucleus. Functionally, orphan nuclear receptor that binds DNA containing an extended core motif half-site sequence 5'-AAGTCA-3'. In males, plays an essential role in the migration of the linker cell which guides gonad elongation during the L3 and L4 stages of larval development by negatively regulating the expression of netrin receptor unc-5 at the mid-L3 stage. Involved in the regulation of non-apoptotic cell death in the linker cell, acting upstream of or in parallel to transcription factor hsf-1. Represses hypoxia response genes, fmo-2 and acs-2, in both normoxic and hypoxic conditions, probably acting via repression of nuclear receptor nhr-49. This chain is Nuclear hormone receptor family member nhr-67 (nhr-67), found in Caenorhabditis elegans.